A 543-amino-acid polypeptide reads, in one-letter code: Chaperonin GroEL 1 (543 aa).

ATP is bound by residues 29-32, 86-90, glycine 413, 479-481, and aspartate 495; these read TLGP, DGTTT, and NAA.

It belongs to the chaperonin (HSP60) family. Forms a cylinder of 14 subunits composed of two heptameric rings stacked back-to-back. Interacts with the co-chaperonin GroES.

The protein localises to the cytoplasm. The enzyme catalyses ATP + H2O + a folded polypeptide = ADP + phosphate + an unfolded polypeptide.. Its function is as follows. Together with its co-chaperonin GroES, plays an essential role in assisting protein folding. The GroEL-GroES system forms a nano-cage that allows encapsulation of the non-native substrate proteins and provides a physical environment optimized to promote and accelerate protein folding. The polypeptide is Chaperonin GroEL 1 (Prochlorococcus marinus (strain NATL2A)).